The primary structure comprises 158 residues: 6,7-dimethyl-8-ribityllumazine synthase (158 aa).

5-amino-6-(D-ribitylamino)uracil contacts are provided by residues Phe23, 61 to 63 (SFE), and 85 to 87 (AVI). 90–91 (ET) is a binding site for (2S)-2-hydroxy-3-oxobutyl phosphate. His93 acts as the Proton donor in catalysis. Position 118 (Phe118) interacts with 5-amino-6-(D-ribitylamino)uracil. Residue Arg132 participates in (2S)-2-hydroxy-3-oxobutyl phosphate binding.

The protein belongs to the DMRL synthase family.

It catalyses the reaction (2S)-2-hydroxy-3-oxobutyl phosphate + 5-amino-6-(D-ribitylamino)uracil = 6,7-dimethyl-8-(1-D-ribityl)lumazine + phosphate + 2 H2O + H(+). It participates in cofactor biosynthesis; riboflavin biosynthesis; riboflavin from 2-hydroxy-3-oxobutyl phosphate and 5-amino-6-(D-ribitylamino)uracil: step 1/2. Its function is as follows. Catalyzes the formation of 6,7-dimethyl-8-ribityllumazine by condensation of 5-amino-6-(D-ribitylamino)uracil with 3,4-dihydroxy-2-butanone 4-phosphate. This is the penultimate step in the biosynthesis of riboflavin. The polypeptide is 6,7-dimethyl-8-ribityllumazine synthase (Prochlorococcus marinus (strain AS9601)).